The sequence spans 170 residues: uncharacterized protein (170 aa).

This is an uncharacterized protein from Archaeoglobus fulgidus (strain ATCC 49558 / DSM 4304 / JCM 9628 / NBRC 100126 / VC-16).